We begin with the raw amino-acid sequence, 503 residues long: Anhydrotetracycline monooxygenase (503 aa).

The protein belongs to the PheA/TfdB FAD monooxygenase family. Requires FAD as cofactor.

The enzyme catalyses anhydrotetracycline + NADPH + O2 + H(+) = 5a,11a-dehydrotetracycline + NADP(+) + H2O. The protein operates within antibiotic biosynthesis; oxytetracycline biosynthesis. In terms of biological role, catalyzes hydroxylation of the anthracycline structure at position C-6 during the biosynthesis of oxytetracyline. This chain is Anhydrotetracycline monooxygenase, found in Streptomyces rimosus.